The primary structure comprises 244 residues: Heat shock transcription factor (244 aa).

A DNA-binding region spans residues 13–108; it reads IPKFIMKLYK…LLGFDDSLRM (96 aa). The interval 123–168 is involved in trimerization; the sequence is DGSLKEIVEYLYVQNQELYTELSVCKERIERQERALNGLIEILSRV. The interval 204 to 244 is disordered; that stretch reads EGCEPASPPLQDKGIPELSFKPGGIPHADSDTKDDNYDPFF. Over residues 231–244 the composition is skewed to basic and acidic residues; sequence ADSDTKDDNYDPFF.

Belongs to the HSF family. In terms of assembly, homotrimer. Homotrimerization increases the affinity of HSF1 to DNA.

It localises to the nucleus. Its function is as follows. DNA-binding transcription factor that specifically binds heat shock promoter elements (HSE) and activates transcription. In Encephalitozoon cuniculi (strain GB-M1) (Microsporidian parasite), this protein is Heat shock transcription factor.